The sequence spans 72 residues: MPVQAVCPYCGNRIITVTTFVPGALTWLLCTTLFLFGYVLGCCFLAFCIRSLMDVKHSCPVCQRELFYYHRL.

Residues 1 to 71 (MPVQAVCPYC…CQRELFYYHR (71 aa)) form the LITAF domain. 2 residues coordinate Zn(2+): Cys7 and Cys10. The segment at 22-45 (PGALTWLLCTTLFLFGYVLGCCFL) is membrane-binding amphipathic helix. Zn(2+) is bound by residues Cys59 and Cys62.

The protein belongs to the CDIP1/LITAF family.

It localises to the membrane. This Homo sapiens (Human) protein is LITAF domain-containing protein.